The sequence spans 443 residues: Threonine/serine transporter TdcC (443 aa).

11 helical membrane-spanning segments follow: residues threonine 22–isoleucine 42, alanine 44–phenylalanine 64, glycine 97–valine 117, phenylalanine 140–methionine 160, valine 163–isoleucine 183, isoleucine 207–isoleucine 227, methionine 261–alanine 281, alanine 319–leucine 339, isoleucine 366–leucine 386, isoleucine 389–isoleucine 409, and aspartate 423–phenylalanine 443.

It belongs to the amino acid/polyamine transporter 2 family. SdaC/TdcC subfamily.

The protein resides in the cell inner membrane. It catalyses the reaction L-threonine(in) + H(+)(in) = L-threonine(out) + H(+)(out). It carries out the reaction L-serine(in) + H(+)(in) = L-serine(out) + H(+)(out). Functionally, involved in the import of threonine and serine into the cell, with the concomitant import of a proton (symport system). This Citrobacter koseri (strain ATCC BAA-895 / CDC 4225-83 / SGSC4696) protein is Threonine/serine transporter TdcC.